The primary structure comprises 805 residues: Ubiquitin carboxyl-terminal hydrolase 5 (805 aa).

The 125-residue stretch at 159-283 (HGDALLLIDV…WVKLGGAYQS (125 aa)) folds into the Rhodanese domain. The interval 359–380 (RNSPTVQKFSPHPPTTLSKLNT) is disordered. One can recognise a USP domain in the interval 446 to 804 (VGLENIGNCC…SAYVLFYERI (359 aa)). The Nucleophile role is filled by C455. The active-site Proton acceptor is the H761.

Belongs to the peptidase C19 family.

The catalysed reaction is Thiol-dependent hydrolysis of ester, thioester, amide, peptide and isopeptide bonds formed by the C-terminal Gly of ubiquitin (a 76-residue protein attached to proteins as an intracellular targeting signal).. This is Ubiquitin carboxyl-terminal hydrolase 5 (UBP5) from Saccharomyces cerevisiae (strain ATCC 204508 / S288c) (Baker's yeast).